Reading from the N-terminus, the 289-residue chain is uncharacterized protein (289 aa).

Residue Glu48 is part of the active site.

Belongs to the PhzF family.

This is an uncharacterized protein from Pasteurella multocida (strain Pm70).